The following is a 231-amino-acid chain: Somatolactin-1 (231 aa).

A signal peptide spans 1–24 (MRMIRAIKQGQWAVLLWPYLLTAS). Cystine bridges form between Cys29/Cys39, Cys89/Cys205, and Cys222/Cys230. N-linked (GlcNAc...) asparagine glycosylation is present at Asn145.

The protein belongs to the somatotropin/prolactin family. Pituitary gland.

It is found in the secreted. This chain is Somatolactin-1, found in Sparus aurata (Gilthead sea bream).